The primary structure comprises 308 residues: UDP-N-acetylenolpyruvoylglucosamine reductase (308 aa).

In terms of domain architecture, FAD-binding PCMH-type spans 22 to 185 (RVGGPADWLF…TEATFRAEAG (164 aa)). Arg-165 is a catalytic residue. Basic and acidic residues predominate over residues 197–211 (QIARRDSSQPTKERS). Residues 197-228 (QIARRDSSQPTKERSAGSTFRNPAGFSSTGRA) are disordered. The span at 212–226 (AGSTFRNPAGFSSTG) shows a compositional bias: polar residues. Ser-214 acts as the Proton donor in catalysis. Glu-296 is a catalytic residue.

The protein belongs to the MurB family. It depends on FAD as a cofactor.

It is found in the cytoplasm. It catalyses the reaction UDP-N-acetyl-alpha-D-muramate + NADP(+) = UDP-N-acetyl-3-O-(1-carboxyvinyl)-alpha-D-glucosamine + NADPH + H(+). The protein operates within cell wall biogenesis; peptidoglycan biosynthesis. Cell wall formation. This Cereibacter sphaeroides (strain ATCC 17023 / DSM 158 / JCM 6121 / CCUG 31486 / LMG 2827 / NBRC 12203 / NCIMB 8253 / ATH 2.4.1.) (Rhodobacter sphaeroides) protein is UDP-N-acetylenolpyruvoylglucosamine reductase.